The sequence spans 465 residues: BTB/POZ and MATH domain-containing protein 4 (465 aa).

The tract at residues 12–40 is disordered; it reads LQRQNPLQKSEQQRRNFEMPSPPTTTSLS. Residues 46 to 180 form the MATH domain; sequence NGSHSFTIKG…DDCLKINCTV (135 aa). The BTB domain occupies 216 to 282; that stretch reads SDITFNVSGE…IYKDALIEDA (67 aa). Disordered regions lie at residues 395 to 429 and 441 to 465; these read SGGG…INGG and VNAN…ELED. Low complexity predominate over residues 442 to 458; sequence NANGSGRNNNDNNNSDD.

The protein belongs to the Tdpoz family. Interacts with RAP2-4. Binds to MYB56 at the promoter of FLOWERING LOCUS T (FT). Ubiquitous.

The protein localises to the cytoplasm. Its pathway is protein modification; protein ubiquitination. In terms of biological role, may act as a substrate-specific adapter of an E3 ubiquitin-protein ligase complex (CUL3-RBX1-BTB) which mediates the ubiquitination and subsequent proteasomal degradation of target proteins. This is BTB/POZ and MATH domain-containing protein 4 (BPM4) from Arabidopsis thaliana (Mouse-ear cress).